We begin with the raw amino-acid sequence, 313 residues long: Small ribosomal subunit biogenesis GTPase RsgA (313 aa).

The 154-residue stretch at 82–235 (REKLIAANAT…IIDSPGIQQF (154 aa)) folds into the CP-type G domain. Residues 127 to 130 (NKTD) and 177 to 185 (GQSGMGKST) each bind GTP. Positions 259, 264, 266, and 272 each coordinate Zn(2+).

This sequence belongs to the TRAFAC class YlqF/YawG GTPase family. RsgA subfamily. In terms of assembly, monomer. Associates with 30S ribosomal subunit, binds 16S rRNA. It depends on Zn(2+) as a cofactor.

It localises to the cytoplasm. Functionally, one of several proteins that assist in the late maturation steps of the functional core of the 30S ribosomal subunit. Helps release RbfA from mature subunits. May play a role in the assembly of ribosomal proteins into the subunit. Circularly permuted GTPase that catalyzes slow GTP hydrolysis, GTPase activity is stimulated by the 30S ribosomal subunit. The protein is Small ribosomal subunit biogenesis GTPase RsgA of Nitrosospira multiformis (strain ATCC 25196 / NCIMB 11849 / C 71).